The primary structure comprises 217 residues: Cytochrome c biogenesis ATP-binding export protein CcmA (217 aa).

Positions 6–216 constitute an ABC transporter domain; the sequence is LQLEQLACQR…QYKFFDQGNM (211 aa). 38–45 contacts ATP; it reads GHNGIGKT.

Belongs to the ABC transporter superfamily. CcmA exporter (TC 3.A.1.107) family. In terms of assembly, the complex is composed of two ATP-binding proteins (CcmA) and two transmembrane proteins (CcmB).

The protein resides in the cell inner membrane. It carries out the reaction heme b(in) + ATP + H2O = heme b(out) + ADP + phosphate + H(+). Part of the ABC transporter complex CcmAB involved in the biogenesis of c-type cytochromes; once thought to export heme, this seems not to be the case, but its exact role is uncertain. Responsible for energy coupling to the transport system. The protein is Cytochrome c biogenesis ATP-binding export protein CcmA of Histophilus somni (strain 129Pt) (Haemophilus somnus).